The primary structure comprises 348 residues: Macrophage-capping protein (348 aa).

The residue at position 1 (Met1) is an N-acetylmethionine. Residues 27-75 (EKLKPVPVAQENQGVFFSGDSYLVLHNGPEEVSHLHLWIGQQSSRDEQG) form a Gelsolin-like 1 repeat. Positions 137-146 (KKLYQVKGKK) match the Nuclear localization signal motif. 2 Gelsolin-like repeats span residues 148–188 (IRAT…LERN) and 261–307 (MNLT…KERQ). Position 337 is a phosphoserine (Ser337).

The protein belongs to the villin/gelsolin family. Interacts with NUP62. Interacts with NUTF2 and RAN; involved in CAPG nuclear import. In terms of processing, the N-terminus is blocked. Macrophages and macrophage-like cells.

The protein localises to the nucleus. Its subcellular location is the cytoplasm. It is found in the melanosome. The protein resides in the cell projection. It localises to the lamellipodium. The protein localises to the ruffle. Calcium-sensitive protein which reversibly blocks the barbed ends of actin filaments but does not sever preformed actin filaments. May play an important role in macrophage function. May play a role in regulating cytoplasmic and/or nuclear structures through potential interactions with actin. May bind DNA. This is Macrophage-capping protein (CAPG) from Homo sapiens (Human).